A 266-amino-acid polypeptide reads, in one-letter code: Short-chain dehydrogenase/reductase tropE (266 aa).

Residues L18, D69, and N96 each contribute to the NADP(+) site. Residue S147 is the Proton donor of the active site. NADP(+) is bound by residues Y181, K185, and T216. The active-site Proton acceptor is the Y181. K185 functions as the Lowers pKa of active site Tyr in the catalytic mechanism.

The protein belongs to the short-chain dehydrogenases/reductases (SDR) family.

Its pathway is secondary metabolite biosynthesis. Short-chain dehydrogenase/reductase; part of the gene cluster that mediates the biosynthesis of the tropolone class of fungal maleic anhydrides. The pathway begins with the synthesis of 3-methylorcinaldehyde by the non-reducing polyketide synthase (PKS) tropA. 3-methylorcinaldehyde is the substrate for the FAD-dependent monooxygenase tropB to yield a dearomatized hydroxycyclohexadione. The 2-oxoglutarate-dependent dioxygenase tropC then performs the oxidative ring expansion to provide the first tropolone metabolite stipitaldehyde. Trop D converts stipitaldehyde into stipitacetal which is in turn converted to stipitalide by the short-chain dehydrogenase/reductase tropE. The next steps involve tropF, tropG, tropH, tropI and tropJ to form successive tropolone maleic anhydrides including stipitaldehydic, stipitatonic and stipitatic acids. In Talaromyces stipitatus (strain ATCC 10500 / CBS 375.48 / QM 6759 / NRRL 1006) (Penicillium stipitatum), this protein is Short-chain dehydrogenase/reductase tropE.